A 212-amino-acid polypeptide reads, in one-letter code: Peptide methionine sulfoxide reductase MsrA (212 aa).

The active site involves Cys-52.

Belongs to the MsrA Met sulfoxide reductase family.

The catalysed reaction is L-methionyl-[protein] + [thioredoxin]-disulfide + H2O = L-methionyl-(S)-S-oxide-[protein] + [thioredoxin]-dithiol. It carries out the reaction [thioredoxin]-disulfide + L-methionine + H2O = L-methionine (S)-S-oxide + [thioredoxin]-dithiol. Has an important function as a repair enzyme for proteins that have been inactivated by oxidation. Catalyzes the reversible oxidation-reduction of methionine sulfoxide in proteins to methionine. The protein is Peptide methionine sulfoxide reductase MsrA of Shigella boydii serotype 18 (strain CDC 3083-94 / BS512).